We begin with the raw amino-acid sequence, 76 residues long: Exodeoxyribonuclease 7 small subunit (76 aa).

The protein belongs to the XseB family. Heterooligomer composed of large and small subunits.

The protein resides in the cytoplasm. The enzyme catalyses Exonucleolytic cleavage in either 5'- to 3'- or 3'- to 5'-direction to yield nucleoside 5'-phosphates.. Its function is as follows. Bidirectionally degrades single-stranded DNA into large acid-insoluble oligonucleotides, which are then degraded further into small acid-soluble oligonucleotides. The polypeptide is Exodeoxyribonuclease 7 small subunit (Arthrobacter sp. (strain FB24)).